Reading from the N-terminus, the 230-residue chain is Mitochondrial fission factor homolog B (230 aa).

Residues 1–210 (MSGAAFPSPT…ENKERAKREM (210 aa)) are Cytoplasmic-facing. The interval 117 to 153 (EQTSSVSHPSEEVRTQTKTRRERSVSENAGVHHNGPL) is disordered. The residue at position 142 (Ser-142) is a Phosphoserine. The stretch at 179–210 (VDATSLRRQIVKLNRRLQLLEEENKERAKREM) forms a coiled coil. The chain crosses the membrane as a helical; Anchor for type IV membrane protein span at residues 211–228 (VMYSITVAFWLVNSWVWF). The Extracellular segment spans residues 229–230 (RR).

This sequence belongs to the Tango11 family.

It localises to the mitochondrion outer membrane. The protein resides in the peroxisome. Plays a role in mitochondrial and peroxisomal fission. Promotes the recruitment and association of the fission mediator dynamin-related protein 1 (DNM1L) to the mitochondrial surface. The chain is Mitochondrial fission factor homolog B from Danio rerio (Zebrafish).